Consider the following 507-residue polypeptide: ATP synthase subunit alpha (507 aa).

Residue 170 to 177 (GDRQTGKT) coordinates ATP.

It belongs to the ATPase alpha/beta chains family. As to quaternary structure, F-type ATPases have 2 components, CF(1) - the catalytic core - and CF(0) - the membrane proton channel. CF(1) has five subunits: alpha(3), beta(3), gamma(1), delta(1), epsilon(1). CF(0) has three main subunits: a(1), b(2) and c(9-12). The alpha and beta chains form an alternating ring which encloses part of the gamma chain. CF(1) is attached to CF(0) by a central stalk formed by the gamma and epsilon chains, while a peripheral stalk is formed by the delta and b chains.

Its subcellular location is the cell inner membrane. The enzyme catalyses ATP + H2O + 4 H(+)(in) = ADP + phosphate + 5 H(+)(out). Its function is as follows. Produces ATP from ADP in the presence of a proton gradient across the membrane. The alpha chain is a regulatory subunit. This chain is ATP synthase subunit alpha, found in Fervidobacterium nodosum (strain ATCC 35602 / DSM 5306 / Rt17-B1).